We begin with the raw amino-acid sequence, 132 residues long: Small ribosomal subunit protein uS8 (132 aa).

The protein belongs to the universal ribosomal protein uS8 family. In terms of assembly, part of the 30S ribosomal subunit. Contacts proteins S5 and S12.

One of the primary rRNA binding proteins, it binds directly to 16S rRNA central domain where it helps coordinate assembly of the platform of the 30S subunit. This is Small ribosomal subunit protein uS8 from Cereibacter sphaeroides (strain ATCC 17025 / ATH 2.4.3) (Rhodobacter sphaeroides).